A 465-amino-acid chain; its full sequence is Cysteine--tRNA ligase (465 aa).

A Zn(2+)-binding site is contributed by C27. The 'HIGH' region motif lies at 29-39; it reads PTVYNFFHIGN. Zn(2+) contacts are provided by C207, H232, and E236. The 'KMSKS' region motif lies at 264-268; the sequence is KMSKS. K267 is a binding site for ATP.

Belongs to the class-I aminoacyl-tRNA synthetase family. As to quaternary structure, monomer. Requires Zn(2+) as cofactor.

It is found in the cytoplasm. The catalysed reaction is tRNA(Cys) + L-cysteine + ATP = L-cysteinyl-tRNA(Cys) + AMP + diphosphate. The chain is Cysteine--tRNA ligase from Clostridium botulinum (strain Loch Maree / Type A3).